The chain runs to 271 residues: Non-homologous end joining protein Ku (271 aa).

The region spanning 12–194 (KLSLVTCPVV…DQKPVPELLS (183 aa)) is the Ku domain. The segment at 225–249 (EAKKTPPAKKTKAEEKTGKGSAESN) is disordered.

It belongs to the prokaryotic Ku family. In terms of assembly, homodimer. Interacts with LigD.

Functionally, with LigD forms a non-homologous end joining (NHEJ) DNA repair enzyme, which repairs dsDNA breaks with reduced fidelity. Binds linear dsDNA with 5'- and 3'- overhangs but not closed circular dsDNA nor ssDNA. Recruits and stimulates the ligase activity of LigD. The protein is Non-homologous end joining protein Ku of Methylocella silvestris (strain DSM 15510 / CIP 108128 / LMG 27833 / NCIMB 13906 / BL2).